Here is a 64-residue protein sequence, read N- to C-terminus: Large ribosomal subunit protein bL35 (64 aa).

The protein belongs to the bacterial ribosomal protein bL35 family.

The chain is Large ribosomal subunit protein bL35 from Pelodictyon phaeoclathratiforme (strain DSM 5477 / BU-1).